Consider the following 485-residue polypeptide: MALLVEKTTSGREYKVKDMSQADFGRLEIELAEVEMPGLMASRAEFGPSQPVKGAKITCSLHMTIQTAFLIETLTALGAEVRWCSCNIFSTQDHAAAAIARDSAAVFAWKGETLQEYWWCTERALDWGPGGGPDLIVDDGGDATLLIHEGVKAEEEFAKNGTVPDPTSTDNVEFQLVLTIIKESLKTDPLRYTKMKERLVGVSEETTTGVKKLYQMPANGSLLFLPINVNDSVTKSKFDNLYGCRHSLPDGLMRATDVMIAGKVALVAGYGDVGKGCAAAMKQAGARVIVTEIDPICALQATMEGLQVLFLEDVVSEVDIFVTTTGNKDIIMVDHMRKMKNNAIVCNIGHFDNEIDMHGLETFPGVKRITIKPQTDRWVFPDTNSGIIVLAEGRLMNLGCATGHPSFVMSCSFTNQVIAQLELWNERSSGKYEKKVYVLPKHLDEKVAALHLGKFGAKLTKLTKDQADYIYVPVEGPYKPAHYRY.

Substrate-binding residues include Thr-64, Asp-139, and Glu-205. 206 to 208 is an NAD(+) binding site; it reads TTT. Substrate-binding residues include Lys-235 and Asp-239. Residues Asn-240, 269–274, Glu-292, Asn-327, 348–350, and Asn-397 contribute to the NAD(+) site; these read GYGDVG and IGH.

This sequence belongs to the adenosylhomocysteinase family. NAD(+) serves as cofactor.

The catalysed reaction is S-adenosyl-L-homocysteine + H2O = L-homocysteine + adenosine. The protein operates within amino-acid biosynthesis; L-homocysteine biosynthesis; L-homocysteine from S-adenosyl-L-homocysteine: step 1/1. Adenosylhomocysteine is a competitive inhibitor of S-adenosyl-L-methionine-dependent methyl transferase reactions; therefore adenosylhomocysteinase may play a key role in the control of methylations via regulation of the intracellular concentration of adenosylhomocysteine. The sequence is that of Adenosylhomocysteinase (SAHH) from Solanum lycopersicum (Tomato).